Here is a 297-residue protein sequence, read N- to C-terminus: Counting factor 45-1 (297 aa).

Residues 1–20 (MNKLISLLLVCLVAIALVNA) form the signal peptide. The 212-residue stretch at 24-235 (IDFDSDTVNS…SASTGSGSGS (212 aa)) folds into the Ch-type lysozyme domain. Active-site residues include D29, D119, and E121. N-linked (GlcNAc...) asparagine glycosylation is present at N166. The S-G-S motif repeats stretch occupies residues 231–296 (SGSGSSSGSS…GSSSGSGSGS (66 aa)). The disordered stretch occupies residues 231 to 297 (SGSGSSSGSS…SSSGSGSGSS (67 aa)). The span at 234-275 (GSSSGSSSGSSSGSSSGSGSSSGSGSSSGSSSGSGSGSSSSG) shows a compositional bias: low complexity. Over residues 276–297 (SGSGSGSSSGSGSSSGSGSGSS) the composition is skewed to gly residues.

Belongs to the glycosyl hydrolase 25 family. In terms of assembly, monomer. Component of the counting factor (CF) complex, which includes cf60, cf50, cf45-1 and ctnA.

It localises to the secreted. Cell-counting factor that limits the maximum size of the multicellular structure during aggregation. The protein is Counting factor 45-1 (cf45-1) of Dictyostelium discoideum (Social amoeba).